The chain runs to 274 residues: Diaminopimelate epimerase (274 aa).

N11, Q44, and N64 together coordinate substrate. The Proton donor role is filled by C73. Residues 74–75, N157, N190, and 208–209 each bind substrate; these read GN and ER. Residue C217 is the Proton acceptor of the active site. 218–219 contacts substrate; the sequence is GS.

The protein belongs to the diaminopimelate epimerase family. As to quaternary structure, homodimer.

It is found in the cytoplasm. The catalysed reaction is (2S,6S)-2,6-diaminopimelate = meso-2,6-diaminopimelate. It participates in amino-acid biosynthesis; L-lysine biosynthesis via DAP pathway; DL-2,6-diaminopimelate from LL-2,6-diaminopimelate: step 1/1. Functionally, catalyzes the stereoinversion of LL-2,6-diaminopimelate (L,L-DAP) to meso-diaminopimelate (meso-DAP), a precursor of L-lysine and an essential component of the bacterial peptidoglycan. In Salmonella agona (strain SL483), this protein is Diaminopimelate epimerase.